The primary structure comprises 210 residues: Tetraspanin-31 (210 aa).

The Cytoplasmic portion of the chain corresponds to 1 to 12 (MVCGGFACSKNA). A helical transmembrane segment spans residues 13-33 (LCALNVVYMLVSLLLIGVAAW). Topologically, residues 34–44 (GKGLGLVSSIH) are extracellular. The helical transmembrane segment at 45–65 (IIGGVIAVGVFLLLIAVAGLV) threads the bilayer. Topologically, residues 66–72 (GAVNHHQ) are cytoplasmic. The chain crosses the membrane as a helical span at residues 73–93 (VLLFFYMIILGLVFIFQFVIS). At 94 to 173 (CSCLAINRSK…FLKHSDEALK (80 aa)) the chain is on the extracellular side. 4 N-linked (GlcNAc...) asparagine glycosylation sites follow: Asn-100, Asn-109, Asn-117, and Asn-134. The helical transmembrane segment at 174-194 (ILGGVGLFFSFTEILGVWLAM) threads the bilayer. Over 195 to 210 (RFRNQKDPRANPSAFL) the chain is Cytoplasmic.

It belongs to the tetraspanin (TM4SF) family.

The protein resides in the membrane. In Homo sapiens (Human), this protein is Tetraspanin-31 (TSPAN31).